Here is a 427-residue protein sequence, read N- to C-terminus: Homeotic protein caudal (427 aa).

The segment at 104–273 is disordered; the sequence is QLMQQHHHHH…QPQPGKTRTK (170 aa). Residues 116-129 are compositionally biased toward low complexity; sequence ASSSSASSGSSSSG. The segment covering 145–164 has biased composition (gly residues); sequence GVGGAGGGGGVGGATDGGPG. Over residues 183 to 195 the composition is skewed to polar residues; it reads ITVSGSEISSPGA. Residues 209–243 show a composition bias toward low complexity; that stretch reads HLSAVANNNNNNNNNNNSPSTHNNNNNNNSVSNNN. Position 245 is a phosphothreonine (T245). The short motif at 252 to 257 is the Antp-type hexapeptide element; the sequence is YFDWMK. The homeobox DNA-binding region spans 273–332; it reads KDKYRVVYTDFQRLELEKEYCTSRYITIRRKSELAQTLSLSERQVKIWFQNRRAKERKQN.

This sequence belongs to the Caudal homeobox family. Maternally localized in an anteroposterior gradient in the syncytial blastoderm. Also expressed in the pole cells. Zygotically localized in the primordia of the terminal abdominal segment, the hindgut and in the posterior midgut rudiment. Expressed in the gut, the gonads and parts of the genital disks of third instar larvae (at protein level).

It is found in the nucleus. In terms of biological role, caudal (cad) is one of a number of transcription factors controlling segmentation of the embryo. Further transcriptional regulation via a 5' flanking region containing DNA replication-related elements (DRE) and by dref also regulated by trh and tgo via the CNS midline element. Alongside Bicoid (bcd), caudal forms concentration gradients down the anterior-posterior (A-P) axis providing positional information and subsequent induction of the gap genes. Plays a role in gastrulation/germ band extension, hindgut morphogenesis, positive regulation of cell proliferation, genital disk development and pattern formation. Acts as a key regulator of the Hox gene network and activates transcription via the downstream core promoter element (DPE) relative to the TATA box. Plays a role in the establishment of the hindgut and in the invagination of the hindgut primordium during gastrulation. These effects on the gut are achieved by acting combinatorially at the posterior of the embryo to activate transcription of different targets including fog, fkh and wg. Caudal is involved in regulation of proliferation through transactivation of the E2F gene. Postembryonically its function is mostly restricted to the intestine where it regulates antimicrobial peptide (AMP) levels preserving the normal gut flora. The polypeptide is Homeotic protein caudal (cad) (Drosophila melanogaster (Fruit fly)).